A 334-amino-acid chain; its full sequence is Cytoskeleton protein RodZ (334 aa).

Topologically, residues 1–111 are cytoplasmic; it reads MNTEATHDQN…LGKRRKKRDG (111 aa). Positions 19-71 constitute an HTH cro/C1-type domain; that stretch reads LRNAREQLGLSQQAVAERLCLKVSTVRDIEEDKAPSDLASTFLRGYIRSYARL. Residues 30–49 constitute a DNA-binding region (H-T-H motif); it reads QQAVAERLCLKVSTVRDIEE. The chain crosses the membrane as a helical; Signal-anchor for type II membrane protein span at residues 112-132; sequence WLMSFTWLVLFVVVGLTGAWW. Residues 133–334 are Periplasmic-facing; that stretch reads WQNHKAQQEE…TLNAEPTPAQ (202 aa). Residues 154–241 are disordered; sequence LNADKDSGQS…PSALPTSQAG (88 aa). 2 stretches are compositionally biased toward low complexity: residues 176–211 and 219–241; these read TTPA…TVVA and TAAT…SQAG.

It belongs to the RodZ family.

It localises to the cell inner membrane. Functionally, cytoskeletal protein that is involved in cell-shape control through regulation of the length of the long axis. This chain is Cytoskeleton protein RodZ, found in Salmonella choleraesuis (strain SC-B67).